A 686-amino-acid chain; its full sequence is MAM domain-containing protein 2 (686 aa).

An N-terminal signal peptide occupies residues 1–18; the sequence is MLLRGVLLALQALQLAGA. 4 MAM domains span residues 24-169, 168-329, 340-498, and 507-666; these read GSCA…YCIE, IECD…HCQN, ASCN…SCSS, and GECT…PCGE. Asn134 and Asn329 each carry an N-linked (GlcNAc...) asparagine glycan. 2 disordered regions span residues 521-543 and 665-686; these read EKRN…TGPK and GEME…EIEY. Asn524 is a glycosylation site (N-linked (GlcNAc...) asparagine).

Post-translationally, O-glycosylated.

Its subcellular location is the secreted. It is found in the extracellular space. It localises to the extracellular matrix. This is MAM domain-containing protein 2 (MAMDC2) from Homo sapiens (Human).